A 302-amino-acid chain; its full sequence is Aspartate carbamoyltransferase catalytic subunit (302 aa).

Carbamoyl phosphate contacts are provided by arginine 53 and threonine 54. Lysine 82 contacts L-aspartate. Residues arginine 103, histidine 131, and glutamine 134 each coordinate carbamoyl phosphate. The L-aspartate site is built by arginine 164 and arginine 223. The carbamoyl phosphate site is built by leucine 260 and proline 261.

Belongs to the aspartate/ornithine carbamoyltransferase superfamily. ATCase family. As to quaternary structure, heterooligomer of catalytic and regulatory chains.

It carries out the reaction carbamoyl phosphate + L-aspartate = N-carbamoyl-L-aspartate + phosphate + H(+). The protein operates within pyrimidine metabolism; UMP biosynthesis via de novo pathway; (S)-dihydroorotate from bicarbonate: step 2/3. Catalyzes the condensation of carbamoyl phosphate and aspartate to form carbamoyl aspartate and inorganic phosphate, the committed step in the de novo pyrimidine nucleotide biosynthesis pathway. The polypeptide is Aspartate carbamoyltransferase catalytic subunit (Methanococcus maripaludis (strain C7 / ATCC BAA-1331)).